The following is a 209-amino-acid chain: CASP-like protein 1A1 (209 aa).

The segment at 1-26 (MEEAKHNEAEEAQGIEAREAKQIEAG) is disordered. Over 1 to 49 (MEEAKHNEAEEAQGIEAREAKQIEAGETSRSSRKLITFEPKLVINKGIS) the chain is Cytoplasmic. The chain crosses the membrane as a helical span at residues 50 to 70 (VLGFVLRLFAVFGTIGSALAM). The Extracellular portion of the chain corresponds to 71–95 (GTTHESVVSLSQLVLLKVKYSDLPT). The chain crosses the membrane as a helical span at residues 96–116 (LMFFVVANAISGGYLVLSLPV). Over 117–130 (SIFHIFSTQAKTSR) the chain is Cytoplasmic. Residues 131 to 151 (IILLVVDTVMLALVSSGASAA) form a helical membrane-spanning segment. Residues 152–183 (TATVYLAHEGNTTANWPPICQQFDGFCERISG) lie on the Extracellular side of the membrane. N-linked (GlcNAc...) asparagine glycosylation occurs at Asn-162. A helical membrane pass occupies residues 184–204 (SLIGSFCAVILLMLIVINSAI). Residues 205 to 209 (SLSRH) lie on the Cytoplasmic side of the membrane.

Belongs to the Casparian strip membrane proteins (CASP) family. Homodimer and heterodimers. As to expression, expressed in the root endodermis.

The protein resides in the cell membrane. In Arabidopsis thaliana (Mouse-ear cress), this protein is CASP-like protein 1A1.